We begin with the raw amino-acid sequence, 595 residues long: uncharacterized protein (595 aa).

Transmembrane regions (helical) follow at residues 64 to 84 (VVFLTSIILGLIIFIIFLIVF), 86 to 106 (IFYAIFGLIGGIFIVILIGVL), 239 to 259 (FYVIACGMIPLFVVMTVPVAS), 281 to 301 (FYLWVPIASIIFMGLVYGILP), 334 to 354 (VHFITLFFWMLSIISFMLFFI), 368 to 388 (MFGILFLILPFILTSYWHFII), 504 to 524 (FIYVVVIYLSFFLYIGTSYIM), 547 to 567 (YLFQGILIYSIFSGASLGILT), and 571 to 591 (IIAGIKHILLMLIVGYMLFKF).

To M.jannaschii FlaJ.

The protein resides in the cell membrane. This is an uncharacterized protein from Methanocaldococcus jannaschii (strain ATCC 43067 / DSM 2661 / JAL-1 / JCM 10045 / NBRC 100440) (Methanococcus jannaschii).